The chain runs to 727 residues: MPHIYKQPLGIFQGFVPTLTDAEVSFIAQRQLLTLPENGELPDDIEYEVDLKVTFANHRLKRAYIALQAWKKAVYSDPFNTTGNWHGPHVCGYTGVFCAPALDDPDVAVVAGVDLNGADIAGHLPAELGLMTDVAMFHLNSNRFCGIIPKSFEKLSLMHEFDVSNNRFVGPFPSVVLSWPAVKFIDVRYNDFEGQVPPELFKKDLDAIFLNNNRFTSTIPDSLGESSASVVTFAHNKFSGCIPRSIGNMKNLNEIIFKDNSLGGCFPSEIGKLANVNVFDASMNSFTGVLPPSFVGLTSMEEFDISGNKLTGFIPENICKLPKLVNLTYAYNYFNGQGDSCVPGSQKQIALDDTRNCLPDRPKQRSAKECAVVISRPVDCSKDKCAGGSSQATPSKSPSPVPTRPVHKPQPPKESPQPNDPYNQSPVKFRRSPPPPQQPHHHVVHSPPPASSPPTSPPVHSTPSPVHKPQPPKESPQPNDPYDQSPVKFRRSPPPPPVHSPPPPSPIHSPPPPPVYSPPPPPPVYSPPPPPPVYSPPPPPPVHSPPPPVHSPPPPVHSPPPPVHSPPPPVHSPPPPVHSPPPPVYSPPPPPVHSPPPPVHSPPPPVHSPPPPVYSPPPPPPVHSPPPPVFSPPPPVHSPPPPVYSPPPPVYSPPPPPVKSPPPPPVYSPPLLPPKMSSPPTQTPVNSPPPRTPSQTVEAPPPSEEFIIPPFIGHQYASPPPPMFQGY.

Positions 1–22 are cleaved as a signal peptide; the sequence is MPHIYKQPLGIFQGFVPTLTDA. An LRR 1 repeat occupies 19 to 43; that stretch reads LTDAEVSFIAQRQLLTLPENGELPD. N-linked (GlcNAc...) asparagine glycosylation occurs at Asn80. LRR repeat units follow at residues 107 to 131, 132 to 154, 156 to 179, 180 to 202, 203 to 226, 228 to 249, 250 to 273, 275 to 296, and 297 to 321; these read VAVVAGVDLNGADIAGHLPAELGLM, TDVAMFHLNSNRFCGIIPKSFEK, SLMHEFDVSNNRFVGPFPSVVLSW, PAVKFIDVRYNDFEGQVPPELFK, KDLDAIFLNNNRFTSTIPDSLGES, ASVVTFAHNKFSGCIPRSIGNM, KNLNEIIFKDNSLGGCFPSEIGKL, NVNVFDASMNSFTGVLPPSFVG, and LTSMEEFDISGNKLTGFIPENICKL. A glycan (N-linked (GlcNAc...) asparagine) is linked at Asn326. Residues 381-727 are disordered; the sequence is SKDKCAGGSS…SPPPPMFQGY (347 aa). Composition is skewed to pro residues over residues 397–419, 446–457, 466–479, 492–677, and 718–727; these read SPSPVPTRPVHKPQPPKESPQPN, SPPPASSPPTSP, VHKPQPPKESPQPN, SPPP…PKMS, and SPPPPMFQGY. The tract at residues 432–727 is contains the Ser-Pro(4) repeats; the sequence is SPPPPQQPHH…SPPPPMFQGY (296 aa).

In terms of processing, hydroxylated on proline residues in the S-P-P-P-P repeat. Post-translationally, O-glycosylated on hydroxyprolines. Expressed in flowers, stamen, pollen, and pollinated carpels.

The protein resides in the secreted. It localises to the cell wall. In terms of biological role, modulates cell morphogenesis by regulating cell wall formation and assembly, and/or growth polarization. This Arabidopsis thaliana (Mouse-ear cress) protein is Pollen-specific leucine-rich repeat extensin-like protein 3 (PEX3).